The following is a 156-amino-acid chain: Crossover junction endodeoxyribonuclease RuvC (156 aa).

Residues Asp9, Glu69, and Asp141 contribute to the active site. Asp9, Glu69, and Asp141 together coordinate Mg(2+).

It belongs to the RuvC family. Homodimer which binds Holliday junction (HJ) DNA. The HJ becomes 2-fold symmetrical on binding to RuvC with unstacked arms; it has a different conformation from HJ DNA in complex with RuvA. In the full resolvosome a probable DNA-RuvA(4)-RuvB(12)-RuvC(2) complex forms which resolves the HJ. It depends on Mg(2+) as a cofactor.

The protein resides in the cytoplasm. The enzyme catalyses Endonucleolytic cleavage at a junction such as a reciprocal single-stranded crossover between two homologous DNA duplexes (Holliday junction).. In terms of biological role, the RuvA-RuvB-RuvC complex processes Holliday junction (HJ) DNA during genetic recombination and DNA repair. Endonuclease that resolves HJ intermediates. Cleaves cruciform DNA by making single-stranded nicks across the HJ at symmetrical positions within the homologous arms, yielding a 5'-phosphate and a 3'-hydroxyl group; requires a central core of homology in the junction. The consensus cleavage sequence is 5'-(A/T)TT(C/G)-3'. Cleavage occurs on the 3'-side of the TT dinucleotide at the point of strand exchange. HJ branch migration catalyzed by RuvA-RuvB allows RuvC to scan DNA until it finds its consensus sequence, where it cleaves and resolves the cruciform DNA. The sequence is that of Crossover junction endodeoxyribonuclease RuvC from Acaryochloris marina (strain MBIC 11017).